Here is a 369-residue protein sequence, read N- to C-terminus: Phospho-N-acetylmuramoyl-pentapeptide-transferase (369 aa).

10 helical membrane passes run 3–23, 53–73, 81–101, 118–138, 162–182, 198–218, 240–260, 267–287, 290–310, and 347–367; these read ALLGAGAISLVFTLFLTPLFI, GGIVIILASVIGYFAGHLLTW, VTPSGLLVVFMMVGLGFVGFL, WQKIAGQVIVATVFAVLAITL, FMALGAVIGTGLFIVWICLIV, LAAGASIFSIGSYVIIGFWQF, PLDLAIIAASIVGALIGFLWW, IFMGDTGSLGLGGALAALAIL, TELLLVFIGGLFVIVAGSVVL, and FWIIAGLLVAAGVGTFYLEWI.

Belongs to the glycosyltransferase 4 family. MraY subfamily. The cofactor is Mg(2+).

Its subcellular location is the cell membrane. It carries out the reaction UDP-N-acetyl-alpha-D-muramoyl-L-alanyl-gamma-D-glutamyl-meso-2,6-diaminopimeloyl-D-alanyl-D-alanine + di-trans,octa-cis-undecaprenyl phosphate = di-trans,octa-cis-undecaprenyl diphospho-N-acetyl-alpha-D-muramoyl-L-alanyl-D-glutamyl-meso-2,6-diaminopimeloyl-D-alanyl-D-alanine + UMP. It participates in cell wall biogenesis; peptidoglycan biosynthesis. Its function is as follows. Catalyzes the initial step of the lipid cycle reactions in the biosynthesis of the cell wall peptidoglycan: transfers peptidoglycan precursor phospho-MurNAc-pentapeptide from UDP-MurNAc-pentapeptide onto the lipid carrier undecaprenyl phosphate, yielding undecaprenyl-pyrophosphoryl-MurNAc-pentapeptide, known as lipid I. This Clavibacter sepedonicus (Clavibacter michiganensis subsp. sepedonicus) protein is Phospho-N-acetylmuramoyl-pentapeptide-transferase.